The following is a 386-amino-acid chain: Protein phosphatase methylesterase 1 (386 aa).

The disordered stretch occupies residues 20-48 (ILEKLKGGQEPNSNEEGSDSIGDLPSLKN). Active-site residues include S194, D222, and H348.

Belongs to the AB hydrolase superfamily.

It carries out the reaction [phosphatase 2A protein]-C-terminal L-leucine methyl ester + H2O = [phosphatase 2A protein]-C-terminal L-leucine + methanol + H(+). Demethylates proteins that have been reversibly carboxymethylated. Demethylates the phosphatase PP2A catalytic subunit. This is Protein phosphatase methylesterase 1 (PPE1) from Candida glabrata (strain ATCC 2001 / BCRC 20586 / JCM 3761 / NBRC 0622 / NRRL Y-65 / CBS 138) (Yeast).